The chain runs to 426 residues: Dihydroorotase (426 aa).

Residues histidine 61 and histidine 63 each contribute to the Zn(2+) site. Substrate is bound by residues 63–65 and asparagine 95; that span reads HCR. Positions 146, 180, 229, and 297 each coordinate Zn(2+). Residue aspartate 297 is part of the active site. Histidine 301 is a substrate binding site.

This sequence belongs to the metallo-dependent hydrolases superfamily. DHOase family. Class I DHOase subfamily. It depends on Zn(2+) as a cofactor.

It carries out the reaction (S)-dihydroorotate + H2O = N-carbamoyl-L-aspartate + H(+). The protein operates within pyrimidine metabolism; UMP biosynthesis via de novo pathway; (S)-dihydroorotate from bicarbonate: step 3/3. In terms of biological role, catalyzes the reversible cyclization of carbamoyl aspartate to dihydroorotate. This Methanopyrus kandleri (strain AV19 / DSM 6324 / JCM 9639 / NBRC 100938) protein is Dihydroorotase.